The chain runs to 335 residues: Atypical chemokine receptor 1 (335 aa).

The Extracellular segment spans residues 1–62; sequence MGNCLHPAEL…CNLLDDSALP (62 aa). N-linked (GlcNAc...) asparagine glycans are attached at residues asparagine 16, asparagine 26, and asparagine 32. Disulfide bonds link cysteine 50–cysteine 275 and cysteine 128–cysteine 194. The chain crosses the membrane as a helical span at residues 63-83; the sequence is FFILVSVLGILASGTVLFMFF. The Cytoplasmic portion of the chain corresponds to 84-94; sequence RPLFHWQLCPG. Residues 95 to 115 form a helical membrane-spanning segment; sequence WPVLAQLAVGSALFSIVVPIL. Over 116–128 the chain is Extracellular; the sequence is APGLGNTRSSALC. Residues 129–152 traverse the membrane as a helical segment; that stretch reads SLGYCVWYGSAFAQALLLGCHASL. Topologically, residues 153–165 are cytoplasmic; the sequence is GPKLGAGQVPGLT. A helical transmembrane segment spans residues 166–186; it reads LGLSVGLWGVAALLTLPITLA. Residues 187–206 are Extracellular-facing; sequence SGASGGLCTPAYSMELKALQ. A helical transmembrane segment spans residues 207–227; it reads ATHAVACLAVFVLLPLGLFGA. The Cytoplasmic segment spans residues 228-243; it reads KGLKKALGMGPGPWMN. The helical transmembrane segment at 244 to 264 threads the bilayer; sequence ILWAWFIFWWPHGVVLGLDFL. At 265–286 the chain is on the extracellular side; sequence VRSKLLLLSTCLAQQALDLLLN. A helical transmembrane segment spans residues 287–307; sequence LAEALAILHCVATPLLLALFC. Topologically, residues 308–335 are cytoplasmic; it reads HQATRTLLPSLPLPEGWSSHLDTLGSES.

The protein belongs to the G-protein coupled receptor 1 family. Atypical chemokine receptor subfamily. As to quaternary structure, (Microbial infection) Interacts (via N-terminal extracellular domain) with Plasmodium knowlesi Duffy receptor alpha form (DBPalpha) (via region II).

It localises to the early endosome. It is found in the recycling endosome. The protein resides in the membrane. Atypical chemokine receptor that controls chemokine levels and localization via high-affinity chemokine binding that is uncoupled from classic ligand-driven signal transduction cascades, resulting instead in chemokine sequestration, degradation, or transcytosis. Also known as interceptor (internalizing receptor) or chemokine-scavenging receptor or chemokine decoy receptor. Has a promiscuous chemokine-binding profile, interacting with inflammatory chemokines of both the CXC and the CC subfamilies but not with homeostatic chemokines. Acts as a receptor for chemokines including CCL2, CCL5, CCL7, CCL11, CCL13, CCL14, CCL17, CXCL5, CXCL6, IL8/CXCL8, CXCL11, GRO, RANTES, MCP-1 and TARC. May regulate chemokine bioavailability and, consequently, leukocyte recruitment through two distinct mechanisms: when expressed in endothelial cells, it sustains the abluminal to luminal transcytosis of tissue-derived chemokines and their subsequent presentation to circulating leukocytes; when expressed in erythrocytes, serves as blood reservoir of cognate chemokines but also as a chemokine sink, buffering potential surges in plasma chemokine levels. In terms of biological role, (Microbial infection) Acts as a receptor for the malaria parasite Plasmodium knowlesi. This is Atypical chemokine receptor 1 (ACKR1) from Macaca mulatta (Rhesus macaque).